The sequence spans 328 residues: D-cysteine desulfhydrase (328 aa).

The residue at position 51 (Lys51) is an N6-(pyridoxal phosphate)lysine.

It belongs to the ACC deaminase/D-cysteine desulfhydrase family. As to quaternary structure, homodimer. Pyridoxal 5'-phosphate serves as cofactor.

The enzyme catalyses D-cysteine + H2O = hydrogen sulfide + pyruvate + NH4(+) + H(+). In terms of biological role, catalyzes the alpha,beta-elimination reaction of D-cysteine and of several D-cysteine derivatives. It could be a defense mechanism against D-cysteine. This chain is D-cysteine desulfhydrase, found in Klebsiella pneumoniae subsp. pneumoniae (strain ATCC 700721 / MGH 78578).